We begin with the raw amino-acid sequence, 241 residues long: Ribosomal RNA small subunit methyltransferase G (241 aa).

S-adenosyl-L-methionine-binding positions include Gly-79, Phe-84, 130 to 131 (AE), and Arg-150.

It belongs to the methyltransferase superfamily. RNA methyltransferase RsmG family.

The protein resides in the cytoplasm. In terms of biological role, specifically methylates the N7 position of a guanine in 16S rRNA. The protein is Ribosomal RNA small subunit methyltransferase G of Ligilactobacillus salivarius (strain UCC118) (Lactobacillus salivarius).